Here is a 420-residue protein sequence, read N- to C-terminus: MDTKRCFANRFDDYQGSLLAGQCEEAVAPLVTATIERILQELPPLGGGAEARGATAGASACQGGLYGGVAGVAYMLYHVSQSPLFATARERYLRSAKRLIDACARAEEWGEPDADTRAAFLLGGAGVYAVATLVYHALGRSDYVQPLGKFRALCAVCAPVSFLECGSDELFVGRAGYLCAALVLKQKLAQEVLTPAQIKSICQAILDSGKQYAIKKRKPFPLMYSYYGTEYLGAAHGLSSILQMLLSYHEHLKPSDRELVWQSVDFLMEQEQNCNWPPELGETIERENELVHWCHGAPGIAYLFAKAYLVSKKPQYLDTCIRCGELTWQKGLLKKGPGICHGVAGSAYVFLLLYRLTGNSKYIYRAQRFAQFLFTEEFKAGSRVLESIYSLYEGFSGTVCFLIDLLQPNQAEFPLFSVFV.

The protein belongs to the LanC-like protein family.

This chain is LanC-like protein 3 (LANCL3), found in Homo sapiens (Human).